The chain runs to 259 residues: Phosphatidylglycerol--prolipoprotein diacylglyceryl transferase (259 aa).

4 consecutive transmembrane segments (helical) span residues I10–Y30, I50–Y70, W86–F106, and I112–G132. An a 1,2-diacyl-sn-glycero-3-phospho-(1'-sn-glycerol)-binding site is contributed by R133. 3 helical membrane passes run L169–F189, G197–V217, and I227–I247.

The protein belongs to the Lgt family.

It is found in the cell inner membrane. It carries out the reaction L-cysteinyl-[prolipoprotein] + a 1,2-diacyl-sn-glycero-3-phospho-(1'-sn-glycerol) = an S-1,2-diacyl-sn-glyceryl-L-cysteinyl-[prolipoprotein] + sn-glycerol 1-phosphate + H(+). The protein operates within protein modification; lipoprotein biosynthesis (diacylglyceryl transfer). In terms of biological role, catalyzes the transfer of the diacylglyceryl group from phosphatidylglycerol to the sulfhydryl group of the N-terminal cysteine of a prolipoprotein, the first step in the formation of mature lipoproteins. This is Phosphatidylglycerol--prolipoprotein diacylglyceryl transferase from Ehrlichia ruminantium (strain Gardel).